Reading from the N-terminus, the 231-residue chain is Flagellar L-ring protein (231 aa).

An N-terminal signal peptide occupies residues 1–18 (MKHLLSVFALGGAVLLAG). The N-palmitoyl cysteine moiety is linked to residue Cys-19. Cys-19 is lipidated: S-diacylglycerol cysteine.

This sequence belongs to the FlgH family. In terms of assembly, the basal body constitutes a major portion of the flagellar organelle and consists of four rings (L,P,S, and M) mounted on a central rod.

It is found in the cell outer membrane. The protein resides in the bacterial flagellum basal body. Assembles around the rod to form the L-ring and probably protects the motor/basal body from shearing forces during rotation. The protein is Flagellar L-ring protein of Pseudomonas entomophila (strain L48).